We begin with the raw amino-acid sequence, 303 residues long: Putative F-box protein At5g62060 (303 aa).

In terms of domain architecture, F-box spans lysine 27–isoleucine 74.

This Arabidopsis thaliana (Mouse-ear cress) protein is Putative F-box protein At5g62060.